Reading from the N-terminus, the 446-residue chain is Histidine--tRNA ligase (446 aa).

It belongs to the class-II aminoacyl-tRNA synthetase family. As to quaternary structure, homodimer.

It localises to the cytoplasm. It catalyses the reaction tRNA(His) + L-histidine + ATP = L-histidyl-tRNA(His) + AMP + diphosphate + H(+). This chain is Histidine--tRNA ligase, found in Burkholderia pseudomallei (strain 668).